A 177-amino-acid chain; its full sequence is Large ribosomal subunit protein uL6 (177 aa).

The protein belongs to the universal ribosomal protein uL6 family. In terms of assembly, part of the 50S ribosomal subunit.

This protein binds to the 23S rRNA, and is important in its secondary structure. It is located near the subunit interface in the base of the L7/L12 stalk, and near the tRNA binding site of the peptidyltransferase center. This chain is Large ribosomal subunit protein uL6, found in Beijerinckia indica subsp. indica (strain ATCC 9039 / DSM 1715 / NCIMB 8712).